We begin with the raw amino-acid sequence, 755 residues long: Subtilisin-like protease 4 (755 aa).

An N-terminal signal peptide occupies residues 1–20 (MDYFLFIALTFLLTFHVHNA). The Inhibitor I9 domain occupies 41 to 119 (YIIHVTGPEG…ISAHPQRVLH (79 aa)). The Peptidase S8 domain maps to 128 to 611 (FLGLQQDTGV…SGHVNPSRAN (484 aa)). Aspartate 153 serves as the catalytic Charge relay system. N-linked (GlcNAc...) asparagine glycosylation is present at asparagine 182. The active-site Charge relay system is histidine 217. Residues asparagine 297, asparagine 325, asparagine 393, asparagine 468, and asparagine 529 are each glycosylated (N-linked (GlcNAc...) asparagine). The PA domain occupies 376–461 (PLAYAGKNGK…ATHVSYAAGI (86 aa)). Serine 544 functions as the Charge relay system in the catalytic mechanism. N-linked (GlcNAc...) asparagine glycans are attached at residues asparagine 706 and asparagine 727.

Belongs to the peptidase S8 family.

The protein localises to the secreted. It localises to the extracellular space. It is found in the apoplast. In terms of biological role, required for arbuscular mycorrhiza (AM) development during AM symbiosis with AM fungi (e.g. Glomeromycota intraradices). The protein is Subtilisin-like protease 4 of Lotus japonicus (Lotus corniculatus var. japonicus).